The primary structure comprises 505 residues: Glutamate--tRNA ligase (505 aa).

The 'HIGH' region signature appears at 12–22 (PSPTGDPHVGT). The 'KMSKS' region signature appears at 253-257 (KLSKR). Lysine 256 lines the ATP pocket.

This sequence belongs to the class-I aminoacyl-tRNA synthetase family. Glutamate--tRNA ligase type 1 subfamily. As to quaternary structure, monomer.

Its subcellular location is the cytoplasm. The enzyme catalyses tRNA(Glu) + L-glutamate + ATP = L-glutamyl-tRNA(Glu) + AMP + diphosphate. In terms of biological role, catalyzes the attachment of glutamate to tRNA(Glu) in a two-step reaction: glutamate is first activated by ATP to form Glu-AMP and then transferred to the acceptor end of tRNA(Glu). This chain is Glutamate--tRNA ligase, found in Chlamydia felis (strain Fe/C-56) (Chlamydophila felis).